A 155-amino-acid polypeptide reads, in one-letter code: Lipoprotein signal peptidase (155 aa).

2 helical membrane-spanning segments follow: residues 52 to 72 (ILQG…AGIV) and 85 to 105 (LGVA…DRVF). Catalysis depends on residues Asp-111 and Asp-129. A helical transmembrane segment spans residues 124-144 (IFNIADSSLCVGVILLFIQML).

Belongs to the peptidase A8 family.

The protein resides in the cell membrane. The catalysed reaction is Release of signal peptides from bacterial membrane prolipoproteins. Hydrolyzes -Xaa-Yaa-Zaa-|-(S,diacylglyceryl)Cys-, in which Xaa is hydrophobic (preferably Leu), and Yaa (Ala or Ser) and Zaa (Gly or Ala) have small, neutral side chains.. It functions in the pathway protein modification; lipoprotein biosynthesis (signal peptide cleavage). In terms of biological role, this protein specifically catalyzes the removal of signal peptides from prolipoproteins. The chain is Lipoprotein signal peptidase from Bacillus pumilus (strain SAFR-032).